Consider the following 433-residue polypeptide: Protein translocase subunit SecY (433 aa).

Helical transmembrane passes span 17 to 37 (IVFTILILIVCRFGSFIPIPG), 71 to 91 (IFALAIMPYITASIIIQLMSV), 117 to 137 (LTVLLASFQAYGVAISLESIV), 141 to 161 (GPVVILAGFFFRVTTVITLVV), 184 to 204 (LIIFIGIISGVPSAIISMFEL), 212 to 232 (PLIALAVCIGVVVLIAIIIFF), 268 to 288 (GVIPPIFASSILLFPATLANF), 310 to 330 (YILLYVALIMFFSFFYTAIVF), 366 to 386 (LTVIGGIYLSVICVIPELLMN), and 388 to 408 (YVISLSLGGTSFLIVVNVVLD).

It belongs to the SecY/SEC61-alpha family. In terms of assembly, component of the Sec protein translocase complex. Heterotrimer consisting of SecY, SecE and SecG subunits. The heterotrimers can form oligomers, although 1 heterotrimer is thought to be able to translocate proteins. Interacts with the ribosome. Interacts with SecDF, and other proteins may be involved. Interacts with SecA.

It is found in the cell inner membrane. Its function is as follows. The central subunit of the protein translocation channel SecYEG. Consists of two halves formed by TMs 1-5 and 6-10. These two domains form a lateral gate at the front which open onto the bilayer between TMs 2 and 7, and are clamped together by SecE at the back. The channel is closed by both a pore ring composed of hydrophobic SecY resides and a short helix (helix 2A) on the extracellular side of the membrane which forms a plug. The plug probably moves laterally to allow the channel to open. The ring and the pore may move independently. In Rickettsia felis (strain ATCC VR-1525 / URRWXCal2) (Rickettsia azadi), this protein is Protein translocase subunit SecY.